A 134-amino-acid chain; its full sequence is D-ribose pyranase (134 aa).

His-20 functions as the Proton donor in the catalytic mechanism. Substrate is bound by residues Asp-28, His-99, and 123–125 (YSN).

Belongs to the RbsD / FucU family. RbsD subfamily. In terms of assembly, homodecamer.

The protein localises to the cytoplasm. It carries out the reaction beta-D-ribopyranose = beta-D-ribofuranose. It participates in carbohydrate metabolism; D-ribose degradation; D-ribose 5-phosphate from beta-D-ribopyranose: step 1/2. Functionally, catalyzes the interconversion of beta-pyran and beta-furan forms of D-ribose. This is D-ribose pyranase from Staphylococcus aureus (strain Mu3 / ATCC 700698).